The sequence spans 264 residues: MANYHLMVPNPSRNAQIPSEAQRPMYGESHPSLFANMNNKKVVVAAACTLPADSLFAVMLYLIYPDSFLPSTLFIVNFSLVLLALLGINSKVSSMILPALVWKCVLLLFLLFLGCISVDAYQVPATDLEEAHVSQPQEQPHRSMMVWKDLAAKYPMLPFIAVACTIVLAVEARVFFSAWQKICCPAVVNDESNLEKSPPSYNACVRATASEKDLPSYEDALKNSSQQPSTSSSSSSPPSRPPHSVYTIPDVKMHKSSMMTVISL.

The next 4 helical transmembrane spans lie at 43 to 63, 68 to 88, 96 to 116, and 150 to 170; these read VVAA…LYLI, FLPS…LLGI, ILPA…LGCI, and LAAK…VLAV. The tract at residues 216 to 247 is disordered; that stretch reads SYEDALKNSSQQPSTSSSSSSPPSRPPHSVYT. Low complexity predominate over residues 224–237; the sequence is SSQQPSTSSSSSSP.

The protein localises to the membrane. This is an uncharacterized protein from Caenorhabditis elegans.